The sequence spans 860 residues: Late endosome and vacuole interface protein 11 (860 aa).

The interval 19-45 is disordered; it reads EIINNSDHSSSHSTSHEEEDEEEDDTE. A compositionally biased stretch (low complexity) spans 20–31; sequence IINNSDHSSSHS. Acidic residues predominate over residues 35-45; the sequence is EEEDEEEDDTE. A BED-type zinc finger spans residues 84 to 138; that stretch reads KNIAKFWSHFLAIEKKLTKVKCKHCGEILTRSDASLTKTFRSHLKTKHNISANKN. Residues Cys-105, Cys-108, His-126, and His-131 each coordinate Zn(2+).

It belongs to the VID22 family.

Its subcellular location is the nucleus. Involved in vacuolar processing and morphology. The polypeptide is Late endosome and vacuole interface protein 11 (ENV11) (Saccharomyces cerevisiae (strain ATCC 204508 / S288c) (Baker's yeast)).